A 943-amino-acid polypeptide reads, in one-letter code: Translation initiation factor IF-2 (943 aa).

A compositionally biased stretch (low complexity) spans Val-99 to Gln-113. The disordered stretch occupies residues Val-99–Ala-354. Residues Asp-117–Lys-141 are compositionally biased toward basic and acidic residues. Over residues Ala-145–Thr-172 the composition is skewed to low complexity. The segment covering Lys-173–Lys-197 has biased composition (basic and acidic residues). The segment covering Lys-200–Glu-215 has biased composition (low complexity). The span at Gln-216–Met-250 shows a compositional bias: basic and acidic residues. Residues Lys-251–Ala-264 are compositionally biased toward low complexity. 2 stretches are compositionally biased toward basic and acidic residues: residues Ala-295–Gln-308 and Gly-319–Arg-335. The region spanning Pro-443–Thr-612 is the tr-type G domain. A G1 region spans residues Gly-452–Thr-459. Gly-452–Thr-459 is a binding site for GTP. The interval Gly-477 to His-481 is G2. The segment at Asp-498–Gly-501 is G3. GTP-binding positions include Asp-498–His-502 and Asn-552–Asp-555. A G4 region spans residues Asn-552–Asp-555. The segment at Ser-588 to Lys-590 is G5.

It belongs to the TRAFAC class translation factor GTPase superfamily. Classic translation factor GTPase family. IF-2 subfamily.

It is found in the cytoplasm. Its function is as follows. One of the essential components for the initiation of protein synthesis. Protects formylmethionyl-tRNA from spontaneous hydrolysis and promotes its binding to the 30S ribosomal subunits. Also involved in the hydrolysis of GTP during the formation of the 70S ribosomal complex. The polypeptide is Translation initiation factor IF-2 (Neisseria gonorrhoeae (strain ATCC 700825 / FA 1090)).